The chain runs to 227 residues: Enolase-phosphatase E1 (227 aa).

Mg(2+)-binding residues include D12 and E14. Residues 118–119 (SS) and K159 contribute to the substrate site. D186 provides a ligand contact to Mg(2+).

It belongs to the HAD-like hydrolase superfamily. MasA/MtnC family. In terms of assembly, monomer. It depends on Mg(2+) as a cofactor.

It is found in the cytoplasm. The protein resides in the nucleus. It catalyses the reaction 5-methylsulfanyl-2,3-dioxopentyl phosphate + H2O = 1,2-dihydroxy-5-(methylsulfanyl)pent-1-en-3-one + phosphate. Its pathway is amino-acid biosynthesis; L-methionine biosynthesis via salvage pathway; L-methionine from S-methyl-5-thio-alpha-D-ribose 1-phosphate: step 3/6. It participates in amino-acid biosynthesis; L-methionine biosynthesis via salvage pathway; L-methionine from S-methyl-5-thio-alpha-D-ribose 1-phosphate: step 4/6. Its function is as follows. Bifunctional enzyme that catalyzes the enolization of 2,3-diketo-5-methylthiopentyl-1-phosphate (DK-MTP-1-P) into the intermediate 2-hydroxy-3-keto-5-methylthiopentenyl-1-phosphate (HK-MTPenyl-1-P), which is then dephosphorylated to form the acireductone 1,2-dihydroxy-3-keto-5-methylthiopentene (DHK-MTPene). This chain is Enolase-phosphatase E1, found in Vanderwaltozyma polyspora (strain ATCC 22028 / DSM 70294 / BCRC 21397 / CBS 2163 / NBRC 10782 / NRRL Y-8283 / UCD 57-17) (Kluyveromyces polysporus).